The following is a 389-amino-acid chain: MKLELTPRQRKILWATVRSYIATAEPVGSKTLAQSYNFGVSTATIRNDLATLEQVGLLFQPHTSAGRVPSDFGYRVYVNDLLTSANSGGIPHDAPQPDPHPALQQLMDQLGRELGDDLDSLLQRVAQLLAHLSGCIALITPPQGPVVAIHHVQLVSVAPGRVMVLVVTDSYQTHSALVSPPDWPSDSREDLEDELQLLSNFLTLKLRGKTFAELQDLSWLKLDEEFRTYGHWLQQLLRSVVQRCLQPSLGQVFSAGMAELMRQPEFSQARQVQAVMQLIEEGAKQLQGMIGLHFADGGDPQLAYLPPLPSSTEMDQESGQSARKTPVIIYIGSENPLESLHHCTVIASTYHRRSAPLGTVTLLGPTRMAYERSIAAVQAVASHLTRALA.

Belongs to the HrcA family.

Functionally, negative regulator of class I heat shock genes (grpE-dnaK-dnaJ and groELS operons). Prevents heat-shock induction of these operons. The polypeptide is Heat-inducible transcription repressor HrcA (Synechococcus sp. (strain JA-2-3B'a(2-13)) (Cyanobacteria bacterium Yellowstone B-Prime)).